The chain runs to 1042 residues: Atrial natriuretic peptide-converting enzyme (1042 aa).

The segment at 1 to 25 is disordered; the sequence is MKQSPALAPEERCRRAGSPKPVLRA. At 1–45 the chain is on the cytoplasmic side; that stretch reads MKQSPALAPEERCRRAGSPKPVLRADDNNMGNGCSQKLATANLLR. Residues 26–29 carry the DDNN motif motif; the sequence is DDNN. Residues 46–66 form a helical; Signal-anchor for type II membrane protein membrane-spanning segment; the sequence is FLLLVLIPCICALVLLLVILL. At 67–1042 the chain is on the extracellular side; the sequence is SYVGTLQKVY…QIYIQTFLLN (976 aa). N-linked (GlcNAc...) asparagine glycosylation is found at N80, N104, N135, and N141. In terms of domain architecture, FZ 1 spans 134–259; it reads RNTSACMNIT…SNVSRICFSP (126 aa). Disulfide bonds link C139-C199, C147-C192, C183-C223, C212-C256, C216-C240, C269-C282, C277-C295, and C289-C304. N-linked (GlcNAc...) asparagine glycosylation is found at N231, N245, and N251. LDL-receptor class A domains are found at residues 268–304, 305–340, 341–377, and 378–415; these read LCGRGENFLCASGICIPGKLQCNGYNDCDDWSDEAHC, NCSENLFHCHTGKCLNYSLVCDGYDDCGDLSDEQNC, DCNPTTEHRCGDGRCIAMEWVCDGDHDCVDKSDEVNC, and SCHSQGLVECRNGQCIPSTFQCDGDEDCKDGSDEENCS. N305 carries an N-linked (GlcNAc...) asparagine glycan. Disulfide bonds link C306–C318, C313–C331, C325–C340, C342–C355, C350–C368, C362–C377, C379–C392, C387–C405, and C399–C414. Residue N320 is glycosylated (N-linked (GlcNAc...) asparagine). A glycan (N-linked (GlcNAc...) asparagine) is linked at N376. N-linked (GlcNAc...) asparagine glycans are attached at residues N413, N446, N451, and N469. The FZ 2 domain occupies 450–573; it reads NNCSQCEPIT…NSDNQTCLMP (124 aa). Disulfide bonds link C455/C518, C463/C511, C502/C540, C529/C570, C533/C557, C580/C592, C587/C605, C599/C614, C616/C630, C624/C643, C637/C652, C655/C667, C662/C680, and C674/C689. A glycan (N-linked (GlcNAc...) asparagine) is linked at N567. LDL-receptor class A domains are found at residues 579 to 614, 615 to 653, and 654 to 689; these read ECSPSHFKCRSGQCVLASRRCDGQADCDDDSDEENC, GCKERDLWECPSNKQCLKHTVICDGFPDCPDYMDEKNCS, and FCQDDELECANHACVSRDLWCDGEADCSDSSDEWDC. N-linked (GlcNAc...) asparagine glycosylation occurs at N651. The region spanning 690-801 is the SRCR domain; sequence VTLSINVNSS…RRPAARMNKR (112 aa). N697 and N761 each carry an N-linked (GlcNAc...) asparagine glycan. Cystine bridges form between C790–C912, C828–C844, C926–C991, C955–C970, and C981–C1010. One can recognise a Peptidase S1 domain in the interval 802–1035; it reads ILGGRTSRPG…FVEWIKRQIY (234 aa). Active-site charge relay system residues include H843 and D892. The active-site Charge relay system is the S985. The N-linked (GlcNAc...) asparagine glycan is linked to N1022.

The protein belongs to the peptidase S1 family. In terms of processing, N-glycosylated; required for processing and activation. Activated through proteolytic processing by a trypsin-like protease; cleaved into a N-terminal propeptide and an activated corin protease fragment. Different soluble forms are produced by cleavage and autocatalytic cleavage: Atrial natriuretic peptide-converting enzyme, 180 kDa soluble fragment is produced by cleavage by ADAM10, while 160 kDa and 100 kDa soluble fragments are produced by autocatalytic cleavage. Cleavage by ADAM10 to produce soluble 180 kDa soluble fragment takes place after the transmembrane region and before FZ 1. Post-translationally, a disulfide bond links the activated corin protease fragment and the N-terminal propeptide. The disulfide bond also links the activated corin protease fragment with soluble fragments (100 kDa, 160 kDa and 180 kDa fragments). In terms of tissue distribution, highly expressed in heart. Expressed in heart myocytes. Also expressed in pregnant uterus. Detected in blood, in plasma as well as in serum (at protein level).

It is found in the cell membrane. The protein localises to the secreted. With respect to regulation, inhibited in a dose-dependent manner by non-specific trypsin-like serine protease inhibitors including benzamidine. Functionally, serine-type endopeptidase involved in atrial natriuretic peptide (NPPA) and brain natriuretic peptide (NPPB) processing. Converts through proteolytic cleavage the non-functional propeptides NPPA and NPPB into their active hormones, ANP and BNP(1-32) respectively, thereby regulating blood pressure in the heart and promoting natriuresis, diuresis and vasodilation. Proteolytic cleavage of pro-NPPA also plays a role in female pregnancy by promoting trophoblast invasion and spiral artery remodeling in uterus. Also acts as a regulator of sodium reabsorption in kidney. Its function is as follows. Has weaker endopeptidase activity compared to isoform 1. The chain is Atrial natriuretic peptide-converting enzyme (CORIN) from Homo sapiens (Human).